Reading from the N-terminus, the 142-residue chain is Hemoglobin subunit theta-1 (142 aa).

One can recognise a Globin domain in the interval 2–142 (ALSAEDRALV…VISALVSEYR (141 aa)). Residues His59 and His88 each contribute to the heme b site.

This sequence belongs to the globin family.

The chain is Hemoglobin subunit theta-1 (HBQ1) from Homo sapiens (Human).